A 971-amino-acid polypeptide reads, in one-letter code: uncharacterized protein (971 aa).

This is an uncharacterized protein from Caenorhabditis elegans.